The primary structure comprises 666 residues: Probable potassium transport system protein Kup (666 aa).

The next 12 helical transmembrane spans lie at 16 to 36, 58 to 78, 98 to 118, 141 to 161, 165 to 185, 221 to 241, 253 to 273, 299 to 319, 343 to 363, 373 to 393, 399 to 419, and 424 to 444; these read GFII…LYTM, ISLI…LIAL, ISPW…SDGA, IYQN…VLFG, FGTG…FSFL, IFIL…YSDL, WPFV…WILA, LATL…FTLI, LYIP…VLAF, YGLA…YYLI, PILA…FFLA, and FMHG…VMFI.

Belongs to the HAK/KUP transporter (TC 2.A.72) family.

The protein resides in the cell membrane. It carries out the reaction K(+)(in) + H(+)(in) = K(+)(out) + H(+)(out). Transport of potassium into the cell. Likely operates as a K(+):H(+) symporter. This chain is Probable potassium transport system protein Kup, found in Streptococcus pyogenes serotype M28 (strain MGAS6180).